Consider the following 102-residue polypeptide: Small ribosomal subunit protein uS10 (102 aa).

The protein belongs to the universal ribosomal protein uS10 family. As to quaternary structure, part of the 30S ribosomal subunit.

In terms of biological role, involved in the binding of tRNA to the ribosomes. The sequence is that of Small ribosomal subunit protein uS10 from Leuconostoc citreum (strain KM20).